A 393-amino-acid chain; its full sequence is Putative mitogen-activated protein kinase kinase kinase 7-like (393 aa).

The Protein kinase domain maps to 11–266; that stretch reads KLSEKFLGAG…PSMKEIEKFL (256 aa). Residues 17-25 and K38 each bind ATP; that span reads LGAGSGGAV. D133 (proton acceptor) is an active-site residue. A disordered region spans residues 339 to 379; the sequence is AAADGDREVRRAEKDTERETSRAAHNGERETRRAGQDVGRE.

Belongs to the protein kinase superfamily. STE Ser/Thr protein kinase family. MAP kinase kinase kinase subfamily. It depends on Mg(2+) as a cofactor.

The enzyme catalyses L-seryl-[protein] + ATP = O-phospho-L-seryl-[protein] + ADP + H(+). The catalysed reaction is L-threonyl-[protein] + ATP = O-phospho-L-threonyl-[protein] + ADP + H(+). The protein is Putative mitogen-activated protein kinase kinase kinase 7-like (Takl1) of Drosophila melanogaster (Fruit fly).